The following is a 383-amino-acid chain: D-aspartate oxidase 3 (383 aa).

An N-terminal signal peptide occupies residues 1–17 (MLYALLLLFGGVSTVSS). The FAD site is built by K56 and S63. N-linked (GlcNAc...) asparagine glycans are attached at residues N152, N271, and N320. Position 339 (T339) interacts with FAD. Residue N371 is glycosylated (N-linked (GlcNAc...) asparagine).

This sequence belongs to the DAMOX/DASOX family. FAD serves as cofactor. As to expression, in both sexes, present in coelomocytes (at protein level). Expressed in hypodermal cells and the proximal gonadal sheath cells in adult hermaphrodites (at protein level). Also expressed in probable head mesodermal cells and unidentified cells in the head, and vulval muscles in adult hermaphrodites. Expressed in the seminal vesicle, spicule and tail cells in adult males (at protein level).

The protein localises to the secreted. The catalysed reaction is D-aspartate + O2 + H2O = oxaloacetate + H2O2 + NH4(+). The enzyme catalyses D-glutamate + O2 + H2O = H2O2 + 2-oxoglutarate + NH4(+). In terms of biological role, selectively catalyzes the oxidative deamination of acidic amino acids. Plays a role in the egg-laying events and maturation processes of the reproductive organs. The sequence is that of D-aspartate oxidase 3 (ddo-3) from Caenorhabditis elegans.